Here is a 406-residue protein sequence, read N- to C-terminus: Phosphopentomutase (406 aa).

Residues Asp10, Asp305, His310, Asp346, His347, and His358 each contribute to the Mn(2+) site.

It belongs to the phosphopentomutase family. Requires Mn(2+) as cofactor.

It localises to the cytoplasm. It carries out the reaction 2-deoxy-alpha-D-ribose 1-phosphate = 2-deoxy-D-ribose 5-phosphate. The enzyme catalyses alpha-D-ribose 1-phosphate = D-ribose 5-phosphate. The protein operates within carbohydrate degradation; 2-deoxy-D-ribose 1-phosphate degradation; D-glyceraldehyde 3-phosphate and acetaldehyde from 2-deoxy-alpha-D-ribose 1-phosphate: step 1/2. Isomerase that catalyzes the conversion of deoxy-ribose 1-phosphate (dRib-1-P) and ribose 1-phosphate (Rib-1-P) to deoxy-ribose 5-phosphate (dRib-5-P) and ribose 5-phosphate (Rib-5-P), respectively. This Methylorubrum extorquens (strain PA1) (Methylobacterium extorquens) protein is Phosphopentomutase.